The chain runs to 784 residues: Toll-like receptor 2 (784 aa).

Positions 1-20 are cleaved as a signal peptide; the sequence is MPHTLWMVWVLGVIISLSKE. Topologically, residues 21–587 are extracellular; it reads ESSNQASLSC…VRLSVSECHR (567 aa). A disulfide bridge connects residues C30 and C36. 19 LRR repeats span residues 54–77, 78–101, 102–125, 126–150, 151–175, 176–199, 200–223, 224–250, 251–278, 279–308, 309–337, 338–361, 362–388, 389–414, 415–437, 438–457, 458–478, 479–500, and 501–524; these read VKSL…RCVN, LQAL…SLGS, LEHL…PLSS, LTFL…HLTK, LQIL…GLTF, LEEL…SIQN, VSHL…VTSS, VECL…TNSL, IKKF…QISG, LLEL…DPGK, VETL…LTER, VKRI…HLKS, LEYL…AWPS, LQTL…TLKN, LTNV…WPEK, MKYL…CIPK, TLEI…NLPQ, LKEL…LLPM, and LLVL…SFHT. An N-linked (GlcNAc...) asparagine glycan is attached at N114. N199 carries N-linked (GlcNAc...) asparagine glycosylation. C353 and C382 are disulfide-bonded. An N-linked (GlcNAc...) asparagine glycan is attached at N414. Residues C432 and C454 are joined by a disulfide bond. N442 carries N-linked (GlcNAc...) asparagine glycosylation. One can recognise an LRRCT domain in the interval 525-579; that stretch reads LKTLEAGGNNFICSCEFLSFTQEQQALAKVLIDWPANYLCDSPSHVRGQQVQDVR. A helical membrane pass occupies residues 588 to 608; sequence TALVSGMCCALFLLILLTGVL. Residues 609–784 are Cytoplasmic-facing; that stretch reads CHRFHGLWYM…WVNLRAAIKS (176 aa). The 144-residue stretch at 639–782 folds into the TIR domain; sequence ICYDAFVSYS…GFWVNLRAAI (144 aa). K754 participates in a covalent cross-link: Glycyl lysine isopeptide (Lys-Gly) (interchain with G-Cter in ubiquitin). The short motif at 761 to 778 is the ATG16L1-binding motif element; that stretch reads YLEWPMDEAQREGFWVNL.

It belongs to the Toll-like receptor family. In terms of assembly, interacts with LY96, TLR1 and TLR6 (via extracellular domain). TLR2 seems to exist in heterodimers with either TLR1 or TLR6 before stimulation by the ligand. The heterodimers form bigger oligomers in response to their corresponding ligands as well as further heterotypic associations with other receptors such as CD14 and/or CD36. Binds MYD88 (via TIR domain). Interacts with TICAM1. Interacts with CNPY3. Interacts with ATG16L1. Interacts with PPP1R11. Interacts with TICAM2. Interacts with TIRAP. Post-translationally, ubiquitinated at Lys-754 by PPP1R11, leading to its degradation. Deubiquitinated by USP2. In terms of processing, glycosylation of Asn-442 is critical for secretion of the N-terminal ectodomain of TLR2.

The protein resides in the membrane. It is found in the cytoplasmic vesicle. The protein localises to the phagosome membrane. Its subcellular location is the membrane raft. In terms of biological role, cooperates with LY96 to mediate the innate immune response to bacterial lipoproteins and other microbial cell wall components. Cooperates with TLR1 or TLR6 to mediate the innate immune response to bacterial lipoproteins or lipopeptides. Acts via MYD88 and TRAF6, leading to NF-kappa-B activation, cytokine secretion and the inflammatory response. May also promote apoptosis in response to lipoproteins. Forms activation clusters composed of several receptors depending on the ligand, these clusters trigger signaling from the cell surface and subsequently are targeted to the Golgi in a lipid-raft dependent pathway. Forms the cluster TLR2:TLR6:CD14:CD36 in response to diacylated lipopeptides and TLR2:TLR1:CD14 in response to triacylated lipopeptides. In Gorilla gorilla gorilla (Western lowland gorilla), this protein is Toll-like receptor 2 (TLR2).